The primary structure comprises 995 residues: UPF0182 protein NFA_45260 (995 aa).

7 helical membrane passes run 18 to 38 (VLLV…RFTD), 63 to 83 (IILF…ALLL), 115 to 135 (FGIG…QSNW), 176 to 196 (FVAV…FGGL), 211 to 231 (IQLA…YWFD), 260 to 280 (KLIL…GVVL), and 288 to 308 (MAAA…PLVV). Residues 904–957 (ATPFGGDPATRPQPGTAPPVVDSTQPPADGGTPQPQTTPPPTGSAAKDAAAAEL) are disordered. Low complexity-rich tracts occupy residues 927–938 (TQPPADGGTPQP) and 946–955 (GSAAKDAAAA).

This sequence belongs to the UPF0182 family.

The protein resides in the cell membrane. This is UPF0182 protein NFA_45260 from Nocardia farcinica (strain IFM 10152).